We begin with the raw amino-acid sequence, 255 residues long: Cathepsin G (255 aa).

An N-terminal signal peptide occupies residues 1 to 18 (MQPLLLLLAFLLPTGAEA). The propeptide at 19-20 (GE) is activation peptide. Residues 21–25 (IIGGR) form an important for antimicrobial activity region. A Peptidase S1 domain is found at 21 to 243 (IIGGRESRPH…FLPWIRTTMR (223 aa)). Cysteines 49 and 65 form a disulfide. Catalysis depends on His64, which acts as the Charge relay system. Asn71 carries an N-linked (GlcNAc...) (complex) asparagine; alternate glycan. Asn71 carries an N-linked (GlcNAc...) (paucimannose) asparagine; alternate glycan. The important for antimicrobial activity stretch occupies residues 97 to 111 (HPQYNQRTIQNDIML). The Charge relay system role is filled by Asp108. Cystine bridges form between Cys142–Cys207 and Cys172–Cys186. Residue Ser201 is the Charge relay system of the active site. A propeptide spanning residues 245–255 (FKLLDQMETPL) is cleaved from the precursor.

It belongs to the peptidase S1 family. (Microbial infection) Interacts with CASP4; the interaction is promoted by the Td92 surface protein of the periodontal pathogen T.denticola and leads to CASP4 activation. As to quaternary structure, (Microbial infection) Interacts with M.tuberculosis protein Rv3364c. In terms of assembly, (Microbial infection) Interacts with S.aureus EapH1; EapH1 acts as a reversible inhibitor of CATG activity. In terms of processing, two C-terminal truncation variants have been identified, one which ends at Arg-243 and one which ends at Ser-244. In terms of tissue distribution, expressed in neutrophils (at protein level). Expressed in B cells.

Its subcellular location is the cell membrane. It is found in the cytoplasmic granule. It localises to the secreted. The protein localises to the cytoplasm. The protein resides in the cytosol. Its subcellular location is the lysosome. It is found in the nucleus. It catalyses the reaction Specificity similar to chymotrypsin C.. With respect to regulation, inhibited by soybean trypsin inhibitor, benzamidine, the synthetic peptide R13K, Z-Gly-Leu-Phe-CH2Cl, phenylmethylsulfonyl fluoride, 3,4-dichloroisocoumarin, DFP, SBTI and alpha-1-antitrypsin. Inhibited by LPS from P.aeruginosa but not by LPS from S.minnesota. Not inhibited by elastinal, CMK, TLCK, ETDA or leupeptin. Its activity is regulated as follows. (Microbial infection) Inhibited reversibly by S.aureus EapH1. (Microbial infection) Activity is induced by the Td92 surface protein of the periodontal pathogen T.denticola. Its function is as follows. Serine protease with trypsin- and chymotrypsin-like specificity. Also displays antibacterial activity against Gram-negative and Gram-positive bacteria independent of its protease activity. Prefers Phe and Tyr residues in the P1 position of substrates but also cleaves efficiently after Trp and Leu. Shows a preference for negatively charged amino acids in the P2' position and for aliphatic amino acids both upstream and downstream of the cleavage site. Required for recruitment and activation of platelets which is mediated by the F2RL3/PAR4 platelet receptor. Binds reversibly to and stimulates B cells and CD4(+) and CD8(+) T cells. Also binds reversibly to natural killer (NK) cells and enhances NK cell cytotoxicity through its protease activity. Cleaves complement C3. Cleaves vimentin. Cleaves thrombin receptor F2R/PAR1 and acts as either an agonist or an inhibitor, depending on the F2R cleavage site. Cleavage of F2R at '41-Arg-|-Ser-42' results in receptor activation while cleavage at '55-Phe-|-Trp-56' results in inhibition of receptor activation. Cleaves the synovial mucin-type protein PRG4/lubricin. Cleaves and activates IL36G which promotes expression of chemokines CXCL1 and CXLC8 in keratinocytes. Cleaves IL33 into mature forms which have greater activity than the unprocessed form. Cleaves coagulation factor F8 to produce a partially activated form. Also cleaves and activates coagulation factor F10. Cleaves leukocyte cell surface protein SPN/CD43 to release its extracellular domain and trigger its intramembrane proteolysis by gamma-secretase, releasing the CD43 cytoplasmic tail chain (CD43-ct) which translocates to the nucleus. Cleaves CCL5/RANTES to produce RANTES(4-68) lacking the N-terminal three amino acids which exhibits reduced chemotactic and antiviral activities. During apoptosis, cleaves SMARCA2/BRM to produce a 160 kDa cleavage product which localizes to the cytosol. Cleaves myelin basic protein MBP in B cell lysosomes at '224-Phe-|-Lys-225' and '248-Phe-|-Ser-249', degrading the major immunogenic MBP epitope and preventing the activation of MBP-specific autoreactive T cells. Cleaves annexin ANXA1 and antimicrobial peptide CAMP to produce peptides which act on neutrophil N-formyl peptide receptors to enhance the release of CXCL2. Acts as a ligand for the N-formyl peptide receptor FPR1, enhancing phagocyte chemotaxis. Has antibacterial activity against the Gram-negative bacteria N.gonorrhoeae and P.aeruginosa. Likely to act against N.gonorrhoeae by interacting with N.gonorrhoeae penA/PBP2. Exhibits potent antimicrobial activity against the Gram-positive bacterium L.monocytogenes. Has antibacterial activity against the Gram-positive bacterium S.aureus and degrades S.aureus biofilms, allowing polymorphonuclear leukocytes to penetrate the biofilm and phagocytose bacteria. Has antibacterial activity against M.tuberculosis. Mediates CASP4 activation induced by the Td92 surface protein of the periodontal pathogen T.denticola, causing production and secretion of IL1A and leading to pyroptosis of gingival fibroblasts. Induces platelet aggregation which is strongly potentiated in the presence of ELANE. The protein is Cathepsin G (CTSG) of Homo sapiens (Human).